Reading from the N-terminus, the 628-residue chain is DNA-directed RNA polymerase subunit beta' (628 aa).

4 residues coordinate Zn(2+): Cys-70, Cys-72, Cys-85, and Cys-88. The Mg(2+) site is built by Asp-472, Asp-474, and Asp-476.

The protein belongs to the RNA polymerase beta' chain family. RpoC1 subfamily. In terms of assembly, in plastids the minimal PEP RNA polymerase catalytic core is composed of four subunits: alpha, beta, beta', and beta''. When a (nuclear-encoded) sigma factor is associated with the core the holoenzyme is formed, which can initiate transcription. Mg(2+) is required as a cofactor. Requires Zn(2+) as cofactor.

Its subcellular location is the plastid. The protein resides in the chloroplast. It catalyses the reaction RNA(n) + a ribonucleoside 5'-triphosphate = RNA(n+1) + diphosphate. DNA-dependent RNA polymerase catalyzes the transcription of DNA into RNA using the four ribonucleoside triphosphates as substrates. In Gracilaria tenuistipitata var. liui (Red alga), this protein is DNA-directed RNA polymerase subunit beta'.